A 281-amino-acid chain; its full sequence is MNFTKTDFVISMGMTIAVIFMSFTFPALGMTGDSVQENEIPEFNITKGSADFAREQPEYPARPSEGTLTYKNNSANWADGRQTYLQKGDTEYLVSFFDNSDNQNPPEWKLNLIKFNSSGSYSESTIITEGESKTLTSADGSYEIGFNNLEIEDSAVGNETASVDWKVLEQPSDSTWIGRLPVVGGLISGANQLASVVGWIGAIIWHFVVQILVTIGNTLLIFYNIFVYFLEFMYWITTAYSGVVAGAPTAWASVIVAIPGILLGFEFVKLVALAISLLPLT.

Hydrophobic stretches follow at residues 8 to 28 (FVIS…FPAL), 196 to 216 (VVGW…VTIG), 219 to 239 (LLIF…ITTA), and 255 to 275 (IVAI…ALAI).

The protein resides in the virion. The sequence is that of Structural protein 26 from Haloarcula hispanica (His1V).